A 93-amino-acid chain; its full sequence is Neurophysin 1 (93 aa).

7 disulfide bridges follow: cysteine 10–cysteine 54, cysteine 13–cysteine 27, cysteine 21–cysteine 44, cysteine 28–cysteine 34, cysteine 61–cysteine 74, cysteine 68–cysteine 86, and cysteine 75–cysteine 80.

The protein belongs to the vasopressin/oxytocin family.

Its function is as follows. Neurophysin 1 specifically binds oxytocin. This chain is Neurophysin 1, found in Struthio camelus (Common ostrich).